The following is a 341-amino-acid chain: tRNA uridine(34) hydroxylase (341 aa).

A Rhodanese domain is found at 139 to 233; that stretch reads SDPEVVLVDT…YLEEVPSTET (95 aa). Catalysis depends on C193, which acts as the Cysteine persulfide intermediate. 2 stretches are compositionally biased toward basic and acidic residues: residues 306–316 and 324–341; these read SLAEERGESHI and IEERRQEKNDKKAKQANK. The disordered stretch occupies residues 306–341; it reads SLAEERGESHIGGDIQNIIEERRQEKNDKKAKQANK.

Belongs to the TrhO family.

The enzyme catalyses uridine(34) in tRNA + AH2 + O2 = 5-hydroxyuridine(34) in tRNA + A + H2O. Its function is as follows. Catalyzes oxygen-dependent 5-hydroxyuridine (ho5U) modification at position 34 in tRNAs. The sequence is that of tRNA uridine(34) hydroxylase from Colwellia psychrerythraea (strain 34H / ATCC BAA-681) (Vibrio psychroerythus).